The chain runs to 360 residues: uncharacterized protein (360 aa).

Residues 4–235 form the ABC transporter domain; that stretch reads LSLQHIQKIY…PANMFVAGFI (232 aa). 37 to 44 contributes to the ATP binding site; the sequence is GPSGCGKS.

This sequence belongs to the ABC transporter superfamily.

This is an uncharacterized protein from Escherichia coli O6:K15:H31 (strain 536 / UPEC).